The chain runs to 491 residues: Delayed-rectifier potassium channel regulatory subunit KCNS3 (491 aa).

Topologically, residues 1-182 are cytoplasmic; that stretch reads MVFGEFFHRP…IRMENPAYCL (182 aa). The chain crosses the membrane as a helical span at residues 183-204; it reads SAKLIAISSLSVVLASIVAMCV. Over 205–220 the chain is Extracellular; it reads HSMSEFQNEDGEVDDP. A helical membrane pass occupies residues 221-243; it reads VLEGVEIACIAWFTGELAVRLVA. Topologically, residues 244–254 are cytoplasmic; the sequence is APCQKKFWKNP. A helical transmembrane segment spans residues 255–275; it reads LNIIDFVSIIPFYATLAVDTK. The Extracellular segment spans residues 276–285; it reads EEESEDIENM. The helical; Voltage-sensor transmembrane segment at 286-306 threads the bilayer; that stretch reads GKVVQILRLMRIFRILKLARH. Residues 307–321 are Cytoplasmic-facing; that stretch reads SVGLRSLGATLRHSY. A helical membrane pass occupies residues 322-343; that stretch reads HEVGLLLLFLSVGISIFSVLIY. Topologically, residues 344–357 are extracellular; it reads SVEKDDHTSSLTSI. Positions 358 to 369 form an intramembrane region, helical; sequence PICWWWATISMT. The Selectivity filter motif lies at 370-375; the sequence is TVGYGD. Residues 370 to 377 lie within the membrane without spanning it; the sequence is TVGYGDTH. Residues 378–384 are Extracellular-facing; sequence PVTLAGK. The helical transmembrane segment at 385 to 413 threads the bilayer; sequence LIASTCIICGILVVALPITIIFNKFSKYY. Residues 414 to 491 lie on the Cytoplasmic side of the membrane; the sequence is QKQKDIDVDQ…TASLENCTAK (78 aa).

It belongs to the potassium channel family. S (TC 1.A.1.2) subfamily. Kv9.3/KCNS3 sub-subfamily. In terms of assembly, heterotetramer with KCNB1. Does not form homomultimers.

Its subcellular location is the cell membrane. Functionally, potassium channel regulatory subunit that modulates the delayed rectifier potassium channel activity of KCNB1 by namely slowing down the deactivation and inactivation time constants. While it does not form functional channel on its own, it can form functional heterotetrameric channels with KCNB1. This chain is Delayed-rectifier potassium channel regulatory subunit KCNS3, found in Oryctolagus cuniculus (Rabbit).